Reading from the N-terminus, the 1856-residue chain is Autophagy-related protein 2 (1856 aa).

Disordered stretches follow at residues 123–167 (NTND…TGNK), 229–283 (LRTL…GNES), 309–328 (KSAA…DKED), 395–428 (TKSR…DASH), 1157–1177 (LNGT…SSLM), 1614–1647 (MLGG…VEVA), and 1719–1741 (KLQP…EDED). Residues 137–147 (ASEDDDEDDID) are compositionally biased toward acidic residues. Over residues 250 to 262 (KKQQGSDNDSPTD) the composition is skewed to polar residues. Acidic residues predominate over residues 270–280 (NDNDDDDDDYG). A compositionally biased stretch (acidic residues) spans 412–424 (DNDEIPEDQSESD). Residues 1157 to 1170 (LNGTENGSTSESSS) are compositionally biased toward low complexity. Positions 1621–1639 (SVRSPNLGGSDNRRNSNAS) are enriched in polar residues. Acidic residues predominate over residues 1732 to 1741 (TEEEEDEDED).

This sequence belongs to the ATG2 family.

The protein resides in the preautophagosomal structure membrane. The protein localises to the endoplasmic reticulum membrane. It catalyses the reaction a 1,2-diacyl-sn-glycero-3-phosphocholine(in) = a 1,2-diacyl-sn-glycero-3-phosphocholine(out). It carries out the reaction a 1,2-diacyl-sn-glycero-3-phospho-L-serine(in) = a 1,2-diacyl-sn-glycero-3-phospho-L-serine(out). The enzyme catalyses a 1,2-diacyl-sn-glycero-3-phosphoethanolamine(in) = a 1,2-diacyl-sn-glycero-3-phosphoethanolamine(out). Lipid transfer protein required for autophagosome completion and peroxisome degradation. Tethers the edge of the isolation membrane (IM) to the endoplasmic reticulum (ER) and mediates direct lipid transfer from ER to IM for IM expansion. ATG2/SPO72 binds to the ER exit site (ERES), which is the membrane source for autophagosome formation, using basic residues in its N-terminal region (NR) and to the expanding edge of the IM through its C-terminal region. The latter binding is assisted by an ATG18-PtdIns3P interaction. ATG2/SPO72 then extracts phospholipids from the membrane source using its NR and transfers them to ATG9 to the IM through its predicted beta-sheet-rich structure for membrane expansion. The protein is Autophagy-related protein 2 (SPO72) of Candida albicans (strain SC5314 / ATCC MYA-2876) (Yeast).